The chain runs to 234 residues: Exotoxin type G (234 aa).

An N-terminal signal peptide occupies residues 1–24 (MKTNILTIIILSCVFSYGSQLAYA).

This sequence belongs to the staphylococcal/streptococcal toxin family.

In terms of biological role, mitogenic for human peripheral blood lymphocytes. The chain is Exotoxin type G (speG) from Streptococcus pyogenes serotype M1.